A 117-amino-acid polypeptide reads, in one-letter code: Immunoglobulin heavy variable 4-38-2 (117 aa).

A signal peptide spans 1–19 (MKHLWFFLLLVAAPRWVLS). Residues 20–44 (QVQLQESGPGLVKPSETLSLTCTVS) form a framework-1 region. The Ig-like domain occupies 20-117 (QVQLQESGPG…ADTAVYYCAR (98 aa)). A disulfide bridge links Cys-41 with Cys-115. Residues 45-53 (GYSISSGYY) are complementarity-determining-1. A framework-2 region spans residues 54–70 (WGWIRQPPGKGLEWIGS). Positions 71–77 (IYHSGST) are complementarity-determining-2. A framework-3 region spans residues 78–115 (YYNPSLKSRVTISVDTSKNQFSLKLSSVTAADTAVYYC). The tract at residues 116–117 (AR) is complementarity-determining-3.

In terms of assembly, immunoglobulins are composed of two identical heavy chains and two identical light chains; disulfide-linked.

It localises to the secreted. The protein resides in the cell membrane. V region of the variable domain of immunoglobulin heavy chains that participates in the antigen recognition. Immunoglobulins, also known as antibodies, are membrane-bound or secreted glycoproteins produced by B lymphocytes. In the recognition phase of humoral immunity, the membrane-bound immunoglobulins serve as receptors which, upon binding of a specific antigen, trigger the clonal expansion and differentiation of B lymphocytes into immunoglobulins-secreting plasma cells. Secreted immunoglobulins mediate the effector phase of humoral immunity, which results in the elimination of bound antigens. The antigen binding site is formed by the variable domain of one heavy chain, together with that of its associated light chain. Thus, each immunoglobulin has two antigen binding sites with remarkable affinity for a particular antigen. The variable domains are assembled by a process called V-(D)-J rearrangement and can then be subjected to somatic hypermutations which, after exposure to antigen and selection, allow affinity maturation for a particular antigen. This Homo sapiens (Human) protein is Immunoglobulin heavy variable 4-38-2.